Here is a 439-residue protein sequence, read N- to C-terminus: Chromosomal replication initiator protein DnaA (439 aa).

Residues 1–72 (MEQFSAFKLL…SKLYDDIRAV (72 aa)) form a domain I, interacts with DnaA modulators region. Residues 72 to 99 (VRFVNEQDFFINLAKLEEDNRETLYQSS) form a domain II region. Residues 100–322 (GLSKNFTFKN…GIATKLLFYV (223 aa)) form a domain III, AAA+ region region. ATP-binding residues include glycine 144, glycine 146, lysine 147, and threonine 148. The segment at 323–439 (KTTKQNLINN…LQDIITSLVI (117 aa)) is domain IV, binds dsDNA.

The protein belongs to the DnaA family. Oligomerizes as a right-handed, spiral filament on DNA at oriC.

Its subcellular location is the cytoplasm. Functionally, plays an essential role in the initiation and regulation of chromosomal replication. ATP-DnaA binds to the origin of replication (oriC) to initiate formation of the DNA replication initiation complex once per cell cycle. Binds the DnaA box (a 9 base pair repeat at the origin) and separates the double-stranded (ds)DNA. Forms a right-handed helical filament on oriC DNA; dsDNA binds to the exterior of the filament while single-stranded (ss)DNA is stabiized in the filament's interior. The ATP-DnaA-oriC complex binds and stabilizes one strand of the AT-rich DNA unwinding element (DUE), permitting loading of DNA polymerase. After initiation quickly degrades to an ADP-DnaA complex that is not apt for DNA replication. Binds acidic phospholipids. This is Chromosomal replication initiator protein DnaA from Mycoplasma pneumoniae (strain ATCC 29342 / M129 / Subtype 1) (Mycoplasmoides pneumoniae).